The following is a 60-amino-acid chain: Short neurotoxin 1 (60 aa).

4 disulfide bridges follow: Cys-3–Cys-22, Cys-17–Cys-39, Cys-41–Cys-52, and Cys-53–Cys-58.

Belongs to the three-finger toxin family. Short-chain subfamily. Type I alpha-neurotoxin sub-subfamily. As to expression, expressed by the venom gland.

Its subcellular location is the secreted. In terms of biological role, binds to muscle nicotinic acetylcholine receptor (nAChR) and inhibit acetylcholine from binding to the receptor, thereby impairing neuromuscular transmission. The recombinant protein also barely blocks voltage-gated potassium channel Kv1.3/KCNA3 (2.71% inhibition at 60 nM of toxin). This chain is Short neurotoxin 1, found in Hydrophis lapemoides (Persian gulf sea snake).